The chain runs to 207 residues: dITP/XTP pyrophosphatase (207 aa).

7–12 (SNNAKK) contacts substrate. D72 (proton acceptor) is an active-site residue. D72 serves as a coordination point for Mg(2+). Substrate contacts are provided by residues S73, 155–158 (FGYD), K184, and 189–190 (HR).

The protein belongs to the HAM1 NTPase family. As to quaternary structure, homodimer. It depends on Mg(2+) as a cofactor.

It catalyses the reaction XTP + H2O = XMP + diphosphate + H(+). The enzyme catalyses dITP + H2O = dIMP + diphosphate + H(+). The catalysed reaction is ITP + H2O = IMP + diphosphate + H(+). Functionally, pyrophosphatase that catalyzes the hydrolysis of nucleoside triphosphates to their monophosphate derivatives, with a high preference for the non-canonical purine nucleotides XTP (xanthosine triphosphate), dITP (deoxyinosine triphosphate) and ITP. Seems to function as a house-cleaning enzyme that removes non-canonical purine nucleotides from the nucleotide pool, thus preventing their incorporation into DNA/RNA and avoiding chromosomal lesions. The sequence is that of dITP/XTP pyrophosphatase from Corynebacterium efficiens (strain DSM 44549 / YS-314 / AJ 12310 / JCM 11189 / NBRC 100395).